The chain runs to 213 residues: Phosphoheptose isomerase (213 aa).

The region spanning 50–208 (MAETFEGGGR…IDLVERMLGY (159 aa)) is the SIS domain. 65–67 (NGG) provides a ligand contact to substrate. Positions 74 and 78 each coordinate Zn(2+). Residues glutamate 78, 109-110 (ND), 135-137 (STS), serine 140, and glutamine 188 contribute to the substrate site. Residues glutamine 188 and histidine 196 each coordinate Zn(2+).

The protein belongs to the SIS family. GmhA subfamily. It depends on Zn(2+) as a cofactor.

It is found in the cytoplasm. The enzyme catalyses 2 D-sedoheptulose 7-phosphate = D-glycero-alpha-D-manno-heptose 7-phosphate + D-glycero-beta-D-manno-heptose 7-phosphate. It functions in the pathway carbohydrate biosynthesis; D-glycero-D-manno-heptose 7-phosphate biosynthesis; D-glycero-alpha-D-manno-heptose 7-phosphate and D-glycero-beta-D-manno-heptose 7-phosphate from sedoheptulose 7-phosphate: step 1/1. Functionally, catalyzes the isomerization of sedoheptulose 7-phosphate in D-glycero-D-manno-heptose 7-phosphate. The protein is Phosphoheptose isomerase of Chlorobium phaeovibrioides (strain DSM 265 / 1930) (Prosthecochloris vibrioformis (strain DSM 265)).